The sequence spans 446 residues: Glutamine synthetase (446 aa).

Positions 18–103 constitute a GS beta-grasp domain; it reads ENVRYLRLQF…LICDVYKTDG (86 aa). A GS catalytic domain is found at 110-446; that stretch reads PRANLKRVLK…WERDQYMKQY (337 aa). Mg(2+) contacts are provided by glutamate 134 and glutamate 136. Glutamate 186 provides a ligand contact to ATP. 2 residues coordinate Mg(2+): glutamate 191 and glutamate 198. Residues 242 to 243 and glycine 243 each bind L-glutamate; that span reads NG. Residue histidine 247 coordinates Mg(2+). Serine 251 lines the ATP pocket. Residues arginine 300, glutamate 306, and arginine 318 each coordinate L-glutamate. ATP contacts are provided by arginine 318 and arginine 323. Glutamate 335 lines the Mg(2+) pocket. Arginine 337 lines the L-glutamate pocket.

The protein belongs to the glutamine synthetase family. As to quaternary structure, oligomer of 12 subunits arranged in the form of two hexagons. In its feedback-inhibited form, interacts with TnrA in order to block its DNA-binding activity. The cofactor is Mg(2+).

The protein resides in the cytoplasm. It carries out the reaction L-glutamate + NH4(+) + ATP = L-glutamine + ADP + phosphate + H(+). Its activity is regulated as follows. Inhibited by glutamine. In terms of biological role, glutamine synthetase (GS) is an unusual multitasking protein that functions as an enzyme, a transcription coregulator, and a chaperone in ammonium assimilation and in the regulation of genes involved in nitrogen metabolism. It catalyzes the ATP-dependent biosynthesis of glutamine from glutamate and ammonia. Feedback-inhibited GlnA also interacts with and regulates the activity of the transcriptional regulator TnrA. During nitrogen limitation, TnrA is in its DNA-binding active state and turns on the transcription of genes required for nitrogen assimilation. Under conditions of nitrogen excess, feedback-inhibited GlnA forms a stable complex with TnrA, which inhibits its DNA-binding activity. In contrast, feedback-inhibited GlnA acts as a chaperone to stabilize the DNA-binding activity of GlnR, which represses the transcription of nitrogen assimilation genes. The sequence is that of Glutamine synthetase from Staphylococcus aureus (strain MSSA476).